A 179-amino-acid chain; its full sequence is Adenine phosphoribosyltransferase (179 aa).

It belongs to the purine/pyrimidine phosphoribosyltransferase family. In terms of assembly, homodimer.

It is found in the cytoplasm. The enzyme catalyses AMP + diphosphate = 5-phospho-alpha-D-ribose 1-diphosphate + adenine. It functions in the pathway purine metabolism; AMP biosynthesis via salvage pathway; AMP from adenine: step 1/1. Functionally, catalyzes a salvage reaction resulting in the formation of AMP, that is energically less costly than de novo synthesis. The sequence is that of Adenine phosphoribosyltransferase from Nitrobacter winogradskyi (strain ATCC 25391 / DSM 10237 / CIP 104748 / NCIMB 11846 / Nb-255).